Consider the following 462-residue polypeptide: Probable Xaa-Pro aminopeptidase NECHADRAFT_60613 (462 aa).

4 residues coordinate Mn(2+): aspartate 259, aspartate 270, glutamate 393, and glutamate 433.

The protein belongs to the peptidase M24B family. Mn(2+) is required as a cofactor.

It catalyses the reaction Release of any N-terminal amino acid, including proline, that is linked to proline, even from a dipeptide or tripeptide.. Its function is as follows. Catalyzes the removal of a penultimate prolyl residue from the N-termini of peptides. The protein is Probable Xaa-Pro aminopeptidase NECHADRAFT_60613 of Fusarium vanettenii (strain ATCC MYA-4622 / CBS 123669 / FGSC 9596 / NRRL 45880 / 77-13-4) (Fusarium solani subsp. pisi).